We begin with the raw amino-acid sequence, 520 residues long: Ribonuclease Y (520 aa).

The Extracellular segment spans residues 1 to 3 (MTP). The helical transmembrane segment at 4–24 (IMMVLISILLILLGLVVGYFV) threads the bilayer. The Cytoplasmic segment spans residues 25–520 (RKTIAEAKIA…RETRAVEYAK (496 aa)). Residues 29-141 (AEAKIAGARG…KVDEMIRMQQ (113 aa)) adopt a coiled-coil conformation. A KH domain is found at 210–273 (TVSVVNLPND…ETARIALDKL (64 aa)). The 94-residue stretch at 336 to 429 (VLKHSMEVAF…VAAADALSAA (94 aa)) folds into the HD domain.

It belongs to the RNase Y family. As to quaternary structure, homodimer. Component of a possible RNA degradosome complex composed of rny, rnjA, rnjB, pnp, pfkA and eno (although rnjA and rnjB's presence is unclear). Interacts with RNA helicase CshA which may also be a member of the RNA degradosome complex. Interacts with full-length dynamin-like protein DynA. Requires Mg(2+) as cofactor. Mn(2+) is required as a cofactor. It depends on Zn(2+) as a cofactor.

It is found in the cell membrane. With respect to regulation, shows preference for transcripts carrying a monophosphate group at the 5' end. Its function is as follows. Endoribonuclease that initiates mRNA decay. Initiates the decay of all SAM-dependent riboswitches, such as yitJ riboswitch. Involved in processing of the gapA operon mRNA, it cleaves between cggR and gapA. Is also the decay-initiating endonuclease for rpsO mRNA. Involved in degradation of type I toxin-antitoxin system bsrG/SR4 RNAs and a minor role in degradation of type I toxin-antitoxin system bsrE/SR5 degradation. The chain is Ribonuclease Y (rny) from Bacillus subtilis (strain 168).